The primary structure comprises 296 residues: tRNA pseudouridine synthase B (296 aa).

Asp-38 serves as the catalytic Nucleophile.

It belongs to the pseudouridine synthase TruB family. Type 1 subfamily.

The enzyme catalyses uridine(55) in tRNA = pseudouridine(55) in tRNA. Its function is as follows. Responsible for synthesis of pseudouridine from uracil-55 in the psi GC loop of transfer RNAs. This Synechocystis sp. (strain ATCC 27184 / PCC 6803 / Kazusa) protein is tRNA pseudouridine synthase B.